Here is a 411-residue protein sequence, read N- to C-terminus: Probable indole-3-pyruvate monooxygenase YUCCA4 (411 aa).

FAD is bound at residue 21–26; the sequence is GAGPSG. 183–188 is a binding site for NADP(+); it reads GCGNSG.

The protein belongs to the FMO family. FAD serves as cofactor. Expressed in leaves, stems, flowers, buds and siliques. Detected in the apical gynoecium and in the developing ovules.

The protein localises to the cytoplasm. It is found in the endoplasmic reticulum membrane. It carries out the reaction indole-3-pyruvate + NADPH + O2 + H(+) = (indol-3-yl)acetate + CO2 + NADP(+) + H2O. Its pathway is plant hormone metabolism; auxin biosynthesis. In terms of biological role, involved in auxin biosynthesis. Both isoforms are catalitically active. Involved during embryogenesis and seedling development. Required for the formation of floral organs and vascular tissues. Belongs to the set of redundant YUCCA genes probably responsible for auxin biosynthesis in shoots. The chain is Probable indole-3-pyruvate monooxygenase YUCCA4 (YUC4) from Arabidopsis thaliana (Mouse-ear cress).